A 156-amino-acid chain; its full sequence is Putative pre-16S rRNA nuclease (156 aa).

This sequence belongs to the YqgF nuclease family.

The protein resides in the cytoplasm. Its function is as follows. Could be a nuclease involved in processing of the 5'-end of pre-16S rRNA. In Phenylobacterium zucineum (strain HLK1), this protein is Putative pre-16S rRNA nuclease.